The sequence spans 482 residues: Glutamyl-tRNA(Gln) amidotransferase subunit A (482 aa).

Active-site charge relay system residues include Lys-74 and Ser-149. Ser-173 (acyl-ester intermediate) is an active-site residue.

Belongs to the amidase family. GatA subfamily. As to quaternary structure, heterotrimer of A, B and C subunits.

It carries out the reaction L-glutamyl-tRNA(Gln) + L-glutamine + ATP + H2O = L-glutaminyl-tRNA(Gln) + L-glutamate + ADP + phosphate + H(+). Functionally, allows the formation of correctly charged Gln-tRNA(Gln) through the transamidation of misacylated Glu-tRNA(Gln) in organisms which lack glutaminyl-tRNA synthetase. The reaction takes place in the presence of glutamine and ATP through an activated gamma-phospho-Glu-tRNA(Gln). This chain is Glutamyl-tRNA(Gln) amidotransferase subunit A, found in Prochlorococcus marinus (strain MIT 9215).